Here is a 250-residue protein sequence, read N- to C-terminus: V-type proton ATPase subunit D (250 aa).

This sequence belongs to the V-ATPase D subunit family. V-ATPase is a heteromultimeric enzyme made up of two complexes: the ATP-hydrolytic V1 complex and the proton translocation V0 complex. The V1 complex consists of three catalytic AB heterodimers that form a heterohexamer, three peripheral stalks each consisting of EG heterodimers, one central rotor including subunits D and F, and the regulatory subunits C and H. The proton translocation complex V0 consists of the proton transport subunit a, a ring of proteolipid subunits c9c'', rotary subunit d, subunits e and f, and two accessory subunits ATP6AP1/Ac45 and ATP6AP2/PRR.

Its function is as follows. Subunit of the V1 complex of vacuolar(H+)-ATPase (V-ATPase), a multisubunit enzyme composed of a peripheral complex (V1) that hydrolyzes ATP and a membrane integral complex (V0) that translocates protons. V-ATPase is responsible for acidifying and maintaining the pH of intracellular compartments and in some cell types, is targeted to the plasma membrane, where it is responsible for acidifying the extracellular environment. This is V-type proton ATPase subunit D (VATPD) from Suberites domuncula (Sponge).